We begin with the raw amino-acid sequence, 291 residues long: Protease HtpX homolog (291 aa).

2 consecutive transmembrane segments (helical) span residues 4–24 (IVLF…SARL) and 38–58 (MGML…ISLM). Residue His-144 coordinates Zn(2+). The active site involves Glu-145. Position 148 (His-148) interacts with Zn(2+). The next 2 membrane-spanning stretches (helical) occupy residues 152-172 (GDMV…IFLA) and 199-219 (VSSI…VMFF). A Zn(2+)-binding site is contributed by Glu-224.

Belongs to the peptidase M48B family. Zn(2+) is required as a cofactor.

Its subcellular location is the cell inner membrane. The protein is Protease HtpX homolog of Prosthecochloris aestuarii (strain DSM 271 / SK 413).